The chain runs to 182 residues: ATP synthase subunit delta (182 aa).

It belongs to the ATPase delta chain family. In terms of assembly, F-type ATPases have 2 components, F(1) - the catalytic core - and F(0) - the membrane proton channel. F(1) has five subunits: alpha(3), beta(3), gamma(1), delta(1), epsilon(1). CF(0) has four main subunits: a(1), b(1), b'(1) and c(10-14). The alpha and beta chains form an alternating ring which encloses part of the gamma chain. F(1) is attached to F(0) by a central stalk formed by the gamma and epsilon chains, while a peripheral stalk is formed by the delta, b and b' chains.

Its subcellular location is the cellular thylakoid membrane. Functionally, f(1)F(0) ATP synthase produces ATP from ADP in the presence of a proton or sodium gradient. F-type ATPases consist of two structural domains, F(1) containing the extramembraneous catalytic core and F(0) containing the membrane proton channel, linked together by a central stalk and a peripheral stalk. During catalysis, ATP synthesis in the catalytic domain of F(1) is coupled via a rotary mechanism of the central stalk subunits to proton translocation. In terms of biological role, this protein is part of the stalk that links CF(0) to CF(1). It either transmits conformational changes from CF(0) to CF(1) or is implicated in proton conduction. The chain is ATP synthase subunit delta from Synechococcus sp. (strain CC9902).